The chain runs to 508 residues: Catalase (508 aa).

Active-site residues include His63 and Asn136. Residue Tyr346 coordinates heme.

It belongs to the catalase family. Homohexamer. Heme is required as a cofactor.

Its subcellular location is the cytoplasm. It catalyses the reaction 2 H2O2 = O2 + 2 H2O. Decomposes hydrogen peroxide into water and oxygen; serves to protect cells from the toxic effects of hydrogen peroxide. The polypeptide is Catalase (katA) (Haemophilus influenzae (strain ATCC 51907 / DSM 11121 / KW20 / Rd)).